The following is a 65-amino-acid chain: Large ribosomal subunit protein bL33c (65 aa).

It belongs to the bacterial ribosomal protein bL33 family.

The protein localises to the plastid. It localises to the chloroplast. This is Large ribosomal subunit protein bL33c from Zygnema circumcarinatum (Green alga).